A 104-amino-acid polypeptide reads, in one-letter code: Large ribosomal subunit protein eL36 (104 aa).

Belongs to the eukaryotic ribosomal protein eL36 family.

In Tetrahymena thermophila (strain SB210), this protein is Large ribosomal subunit protein eL36 (RPL36).